The chain runs to 738 residues: Polyphosphate kinase (738 aa).

Positions Met-1–Leu-48 are disordered. The segment covering Ala-19–Asp-30 has biased composition (basic and acidic residues). Asn-91 provides a ligand contact to ATP. Residues Arg-427 and Arg-457 each coordinate Mg(2+). The Phosphohistidine intermediate role is filled by His-487. ATP is bound by residues Tyr-520, Arg-620, and His-648.

Belongs to the polyphosphate kinase 1 (PPK1) family. Mg(2+) serves as cofactor. In terms of processing, an intermediate of this reaction is the autophosphorylated ppk in which a phosphate is covalently linked to a histidine residue through a N-P bond.

The enzyme catalyses [phosphate](n) + ATP = [phosphate](n+1) + ADP. Functionally, catalyzes the reversible transfer of the terminal phosphate of ATP to form a long-chain polyphosphate (polyP). This chain is Polyphosphate kinase, found in Mycobacterium marinum (strain ATCC BAA-535 / M).